Consider the following 878-residue polypeptide: Probable di- and tripeptidase DUG2 (878 aa).

WD repeat units follow at residues 18 to 57 (NHAF…LIHT), 68 to 107 (HTRS…IRDD), 235 to 274 (RFNQ…GQNT), 282 to 322 (DKID…IIST), and 362 to 405 (PQQG…SAVP). His-520 provides a ligand contact to Zn(2+). The active site involves Asp-522. Asp-553 contributes to the Zn(2+) binding site. Catalysis depends on Glu-586, which acts as the Proton acceptor. Position 587 (Glu-587) interacts with Zn(2+). Residues 608 to 651 (IDWILLSNSTWVDQEHPCLNYGLRGVINAQIKVWSDKPDGHSGL) form a WD 6 repeat. His-853 provides a ligand contact to Zn(2+).

The protein belongs to the peptidase M20A family. As to quaternary structure, component of the GSH degradosomal complex composed of at least DUG1, DUG2 and DUG3. Requires Zn(2+) as cofactor.

The protein localises to the cytoplasm. It is found in the nucleus. Functionally, component of the GSH degradosomal complex involved in the degradation of glutathione (GSH) and other peptides containing a gamma-glu-X bond. The polypeptide is Probable di- and tripeptidase DUG2 (DUG2) (Saccharomyces cerevisiae (strain ATCC 204508 / S288c) (Baker's yeast)).